A 442-amino-acid polypeptide reads, in one-letter code: Dihydrolipoyllysine-residue acetyltransferase component of pyruvate dehydrogenase complex (442 aa).

The region spanning 2–77 (AFEFKLPDIG…TVGQTIITFD (76 aa)) is the Lipoyl-binding domain. At K43 the chain carries N6-lipoyllysine. Residues 84–97 (LQFKGSDESDDAKT) are compositionally biased toward basic and acidic residues. Positions 84 to 136 (LQFKGSDESDDAKTEAQVQSTAEAGQDVAKEEQAQEPAKATGAGQQDQAEVDP) are disordered. Residues 141 to 178 (IAMPSVRKYAREKGVDIRKVTGSGNNGRVVKEDIDSFV) form the Peripheral subunit-binding (PSBD) domain. Residues 182–208 (AQEAAPQETAAPQETAAKPAAAPAPEG) are compositionally biased toward low complexity. The disordered stretch occupies residues 182-215 (AQEAAPQETAAPQETAAKPAAAPAPEGEFPETRE). Residue H413 is part of the active site.

This sequence belongs to the 2-oxoacid dehydrogenase family. As to quaternary structure, forms a 24-polypeptide structural core with octahedral symmetry. Requires (R)-lipoate as cofactor.

It carries out the reaction N(6)-[(R)-dihydrolipoyl]-L-lysyl-[protein] + acetyl-CoA = N(6)-[(R)-S(8)-acetyldihydrolipoyl]-L-lysyl-[protein] + CoA. Its function is as follows. The pyruvate dehydrogenase complex catalyzes the overall conversion of pyruvate to acetyl-CoA and CO(2). It contains multiple copies of three enzymatic components: pyruvate dehydrogenase (E1), dihydrolipoamide acetyltransferase (E2) and lipoamide dehydrogenase (E3). In terms of biological role, the B.subtilis PDH complex also possesses branched-chain 2-oxoacid dehydrogenase (BCDH) activity. This chain is Dihydrolipoyllysine-residue acetyltransferase component of pyruvate dehydrogenase complex (pdhC), found in Bacillus subtilis (strain 168).